Reading from the N-terminus, the 230-residue chain is RING finger protein 141 (230 aa).

Residues 154–191 (ECCICMDGRVDLILPCAHSFCQKCIDKWSDRHRSCPVC) form an RING-type zinc finger.

This is RING finger protein 141 (RNF141) from Gallus gallus (Chicken).